The primary structure comprises 79 residues: Major outer membrane lipoprotein Lpp 2 (79 aa).

Residues 1-21 form the signal peptide; it reads MNRTNQLILGAVVLGSTLLAG. Cys-22 carries the N-palmitoyl cysteine lipid modification. Cys-22 is lipidated: S-diacylglycerol cysteine. 2 consecutive repeats follow at residues 25 to 35 and 39 to 49; these read NAKIDQLSSDV and SAKVEQLSNDV. Residues 28–69 adopt a coiled-coil conformation; sequence IDQLSSDVQTLSAKVEQLSNDVNAMRSDVQAAKDDAARANQR. At Lys-79 the chain carries N6-murein peptidoglycan lysine.

Belongs to the Lpp family. As to quaternary structure, homotrimer.

Its subcellular location is the cell outer membrane. The protein localises to the secreted. The protein resides in the cell wall. Plays an important role in virulence. A highly abundant outer membrane lipoprotein that controls the distance between the inner and outer membranes. The only protein known to be covalently linked to the peptidoglycan network (PGN). Also non-covalently binds the PGN. The link between the cell outer membrane and PGN contributes to maintenance of the structural and functional integrity of the cell envelope, and maintains the correct distance between the PGN and the outer membrane. This is Major outer membrane lipoprotein Lpp 2 from Salmonella typhimurium (strain LT2 / SGSC1412 / ATCC 700720).